The sequence spans 320 residues: Cytochrome f (320 aa).

The signal sequence occupies residues 1 to 35 (MQNRNFNNLIIKWAIRLISIMIIINTIFWSSISEA). Residues phenylalanine 36, cysteine 56, cysteine 59, and histidine 60 each contribute to the heme site. A helical transmembrane segment spans residues 286–305 (IQGLLLFFGSVILAQIFLVL).

Belongs to the cytochrome f family. In terms of assembly, the 4 large subunits of the cytochrome b6-f complex are cytochrome b6, subunit IV (17 kDa polypeptide, petD), cytochrome f and the Rieske protein, while the 4 small subunits are PetG, PetL, PetM and PetN. The complex functions as a dimer. It depends on heme as a cofactor.

It is found in the plastid. The protein localises to the chloroplast thylakoid membrane. Component of the cytochrome b6-f complex, which mediates electron transfer between photosystem II (PSII) and photosystem I (PSI), cyclic electron flow around PSI, and state transitions. The polypeptide is Cytochrome f (petA) (Marchantia polymorpha (Common liverwort)).